A 93-amino-acid chain; its full sequence is Large ribosomal subunit protein uL23cz/uL23cy (93 aa).

It belongs to the universal ribosomal protein uL23 family. As to quaternary structure, part of the 50S ribosomal subunit.

It localises to the plastid. Its subcellular location is the chloroplast. Its function is as follows. Binds to 23S rRNA. This is Large ribosomal subunit protein uL23cz/uL23cy (rpl23-A) from Helianthus annuus (Common sunflower).